The chain runs to 216 residues: Leucyl/phenylalanyl-tRNA--protein transferase (216 aa).

Belongs to the L/F-transferase family.

Its subcellular location is the cytoplasm. The enzyme catalyses N-terminal L-lysyl-[protein] + L-leucyl-tRNA(Leu) = N-terminal L-leucyl-L-lysyl-[protein] + tRNA(Leu) + H(+). It carries out the reaction N-terminal L-arginyl-[protein] + L-leucyl-tRNA(Leu) = N-terminal L-leucyl-L-arginyl-[protein] + tRNA(Leu) + H(+). It catalyses the reaction L-phenylalanyl-tRNA(Phe) + an N-terminal L-alpha-aminoacyl-[protein] = an N-terminal L-phenylalanyl-L-alpha-aminoacyl-[protein] + tRNA(Phe). Functions in the N-end rule pathway of protein degradation where it conjugates Leu, Phe and, less efficiently, Met from aminoacyl-tRNAs to the N-termini of proteins containing an N-terminal arginine or lysine. This Maricaulis maris (strain MCS10) (Caulobacter maris) protein is Leucyl/phenylalanyl-tRNA--protein transferase.